The following is a 279-amino-acid chain: ATP synthase gamma chain (279 aa).

The protein belongs to the ATPase gamma chain family. In terms of assembly, F-type ATPases have 2 components, CF(1) - the catalytic core - and CF(0) - the membrane proton channel. CF(1) has five subunits: alpha(3), beta(3), gamma(1), delta(1), epsilon(1). CF(0) has three main subunits: a, b and c.

It is found in the cell membrane. Functionally, produces ATP from ADP in the presence of a proton gradient across the membrane. The gamma chain is believed to be important in regulating ATPase activity and the flow of protons through the CF(0) complex. This Mycoplasmopsis pulmonis (strain UAB CTIP) (Mycoplasma pulmonis) protein is ATP synthase gamma chain.